The sequence spans 230 residues: ATP synthase subunit a (230 aa).

6 consecutive transmembrane segments (helical) span residues 16–36 (LVLF…WLSI), 73–93 (WVSA…LGLL), 106–126 (TYSI…YLAF), 142–162 (LIPF…IALG), 165–185 (LAAN…AIWT), and 192–212 (IASI…GVAC).

This sequence belongs to the ATPase A chain family. As to quaternary structure, F-type ATPases have 2 components, CF(1) - the catalytic core - and CF(0) - the membrane proton channel. CF(1) has five subunits: alpha(3), beta(3), gamma(1), delta(1), epsilon(1). CF(0) has three main subunits: a, b and c.

It localises to the mitochondrion inner membrane. Mitochondrial membrane ATP synthase (F(1)F(0) ATP synthase or Complex V) produces ATP from ADP in the presence of a proton gradient across the membrane which is generated by electron transport complexes of the respiratory chain. F-type ATPases consist of two structural domains, F(1) - containing the extramembraneous catalytic core and F(0) - containing the membrane proton channel, linked together by a central stalk and a peripheral stalk. During catalysis, ATP synthesis in the catalytic domain of F(1) is coupled via a rotary mechanism of the central stalk subunits to proton translocation. Key component of the proton channel; it may play a direct role in the translocation of protons across the membrane. This Patiria pectinifera (Starfish) protein is ATP synthase subunit a (ATP6).